The primary structure comprises 235 residues: LexA repressor (235 aa).

Residues 26–46 constitute a DNA-binding region (H-T-H motif); the sequence is FDEMKEALDLASKSGIHRLIT. The interval 72–104 is disordered; the sequence is QATTAAPPKGRGAFRPQVLEGGGQAPTTSAQPQ. Active-site for autocatalytic cleavage activity residues include Ser-156 and Lys-193.

This sequence belongs to the peptidase S24 family. As to quaternary structure, homodimer.

It catalyses the reaction Hydrolysis of Ala-|-Gly bond in repressor LexA.. Its function is as follows. Represses a number of genes involved in the response to DNA damage (SOS response), including recA and lexA. In the presence of single-stranded DNA, RecA interacts with LexA causing an autocatalytic cleavage which disrupts the DNA-binding part of LexA, leading to derepression of the SOS regulon and eventually DNA repair. The protein is LexA repressor of Caulobacter sp. (strain K31).